The primary structure comprises 275 residues: Probable dual specificity protein phosphatase DDB_G0271350 (275 aa).

The Tyrosine-protein phosphatase domain occupies 2 to 143 (GISMILDNFL…LCDLELKLTN (142 aa)). C87 (phosphocysteine intermediate) is an active-site residue.

This sequence belongs to the protein-tyrosine phosphatase family. Non-receptor class dual specificity subfamily.

The catalysed reaction is O-phospho-L-tyrosyl-[protein] + H2O = L-tyrosyl-[protein] + phosphate. It carries out the reaction O-phospho-L-seryl-[protein] + H2O = L-seryl-[protein] + phosphate. It catalyses the reaction O-phospho-L-threonyl-[protein] + H2O = L-threonyl-[protein] + phosphate. Functionally, has a dual specificity toward Ser/Thr and Tyr-containing proteins. The protein is Probable dual specificity protein phosphatase DDB_G0271350 of Dictyostelium discoideum (Social amoeba).